A 151-amino-acid chain; its full sequence is Large ribosomal subunit protein bL9 (151 aa).

The protein belongs to the bacterial ribosomal protein bL9 family.

Its function is as follows. Binds to the 23S rRNA. The polypeptide is Large ribosomal subunit protein bL9 (Desulfosudis oleivorans (strain DSM 6200 / JCM 39069 / Hxd3) (Desulfococcus oleovorans)).